A 119-amino-acid chain; its full sequence is Iron-sulfur cluster insertion protein ErpA (119 aa).

Iron-sulfur cluster is bound by residues Cys-47, Cys-111, and Cys-113.

It belongs to the HesB/IscA family. Homodimer. The cofactor is iron-sulfur cluster.

Functionally, required for insertion of 4Fe-4S clusters for at least IspG. The sequence is that of Iron-sulfur cluster insertion protein ErpA from Blochmanniella floridana.